Here is a 615-residue protein sequence, read N- to C-terminus: Elongation factor 4 (615 aa).

The region spanning 14–200 (SKIRNFCIIA…KVAELIPAPT (187 aa)) is the tr-type G domain. GTP is bound by residues 26–31 (DHGKST) and 147–150 (NKID).

It belongs to the TRAFAC class translation factor GTPase superfamily. Classic translation factor GTPase family. LepA subfamily.

Its subcellular location is the cell membrane. The enzyme catalyses GTP + H2O = GDP + phosphate + H(+). Required for accurate and efficient protein synthesis under certain stress conditions. May act as a fidelity factor of the translation reaction, by catalyzing a one-codon backward translocation of tRNAs on improperly translocated ribosomes. Back-translocation proceeds from a post-translocation (POST) complex to a pre-translocation (PRE) complex, thus giving elongation factor G a second chance to translocate the tRNAs correctly. Binds to ribosomes in a GTP-dependent manner. The protein is Elongation factor 4 of Corynebacterium aurimucosum (strain ATCC 700975 / DSM 44827 / CIP 107346 / CN-1) (Corynebacterium nigricans).